The chain runs to 313 residues: tRNA uridine(34) hydroxylase (313 aa).

In terms of domain architecture, Rhodanese spans 124–218 (SDPEVLLIDT…YLEEVPQEET (95 aa)). Cys-178 acts as the Cysteine persulfide intermediate in catalysis.

It belongs to the TrhO family.

It catalyses the reaction uridine(34) in tRNA + AH2 + O2 = 5-hydroxyuridine(34) in tRNA + A + H2O. Functionally, catalyzes oxygen-dependent 5-hydroxyuridine (ho5U) modification at position 34 in tRNAs. This Pseudomonas fluorescens (strain SBW25) protein is tRNA uridine(34) hydroxylase.